Here is a 690-residue protein sequence, read N- to C-terminus: NF-kappa-B-repressing factor (690 aa).

The interval 1-296 (MEKILQMAEG…FKHTFGEDLV (296 aa)) is active repression domain. The short motif at 25 to 45 (KPSKGQKRHLSTCDGQNPPKK) is the Nuclear localization signal element. 2 disordered regions span residues 27–87 (SKGQ…NEQT) and 132–163 (MYFD…QTFP). A Glycyl lysine isopeptide (Lys-Gly) (interchain with G-Cter in SUMO2) cross-link involves residue Lys-68. Low complexity predominate over residues 142 to 163 (STTSQQANSQSTPEPSPSQTFP). Residues 296 to 388 (VVCQIGMSSY…RVFLQDHCLA (93 aa)) mediate DNA binding. A compositionally biased stretch (polar residues) spans 414-431 (PTYPSVKSSQCHTGSSPR). A disordered region spans residues 414–437 (PTYPSVKSSQCHTGSSPRGSGKKK). Lys-500 participates in a covalent cross-link: Glycyl lysine isopeptide (Lys-Gly) (interchain with G-Cter in SUMO2). Positions 551–596 (EDNIGNQLLRKMGWTGGGLGKSGEGIREPISVKEQHKREGLGLDVE) constitute a G-patch domain. An R3H domain is found at 600 to 664 (KIAKRDIEQI…DRYLVVGRKR (65 aa)). Residue Ser-618 is modified to Phosphoserine. Residues Lys-666 and Lys-674 each participate in a glycyl lysine isopeptide (Lys-Gly) (interchain with G-Cter in SUMO2) cross-link.

Interacts with NF-kappa-B. Interacts with XRN2. Interacts (via G-patch domain) with DHX15; promoting the RNA helicase activity of DHX15. Widely and constitutively expressed. Expressed at lower level in colon, peripheral blood lymphocytes, lung and kidney.

Its subcellular location is the nucleus. It is found in the nucleolus. Enhances the ATPase activity of DHX15 by acting like a brace that tethers mobile sections of DHX15 together, stabilizing a functional conformation with high RNA affinity of DHX15. Involved in the constitutive silencing of the interferon beta promoter, independently of the virus-induced signals, and in the inhibition of the basal and cytokine-induced iNOS promoter activity. Also involved in the regulation of IL-8 transcription. May also act as a DNA-binding transcription regulator: interacts with a specific negative regulatory element (NRE) 5'-AATTCCTCTGA-3' to mediate transcriptional repression of certain NK-kappa-B responsive genes. This Homo sapiens (Human) protein is NF-kappa-B-repressing factor.